The primary structure comprises 92 residues: Promotilin (92 aa).

The segment at 12 to 49 (RMQEKERNRGQKKSLGLQQRSEEVGSLDPTEAAEEEGK) is disordered.

This sequence belongs to the motilin family.

It localises to the secreted. In terms of biological role, plays an important role in the regulation of interdigestive gastrointestinal motility and indirectly causes rhythmic contraction of duodenal and colonic smooth muscle. The polypeptide is Promotilin (MLN) (Equus caballus (Horse)).